The sequence spans 189 residues: Molybdenum cofactor guanylyltransferase (189 aa).

Residues 10–12, Lys23, Asn51, Asp69, and Asp99 each bind GTP; that span reads LAG. Position 99 (Asp99) interacts with Mg(2+).

It belongs to the MobA family. Monomer. Requires Mg(2+) as cofactor.

The protein resides in the cytoplasm. The enzyme catalyses Mo-molybdopterin + GTP + H(+) = Mo-molybdopterin guanine dinucleotide + diphosphate. Its function is as follows. Transfers a GMP moiety from GTP to Mo-molybdopterin (Mo-MPT) cofactor (Moco or molybdenum cofactor) to form Mo-molybdopterin guanine dinucleotide (Mo-MGD) cofactor. The sequence is that of Molybdenum cofactor guanylyltransferase from Pasteurella multocida (strain Pm70).